The following is a 91-amino-acid chain: YcgL domain-containing protein ETA_15380 (91 aa).

One can recognise a YcgL domain in the interval 1-85; it reads MFCVIYRSPQ…PLESLLKIHL (85 aa).

The sequence is that of YcgL domain-containing protein ETA_15380 from Erwinia tasmaniensis (strain DSM 17950 / CFBP 7177 / CIP 109463 / NCPPB 4357 / Et1/99).